The primary structure comprises 385 residues: Cytochrome b (385 aa).

Topologically, residues 1 to 27 are mitochondrial matrix; that stretch reads MAFRKSNVYLSLVNSYIIDSPQPSSIN. An a ubiquinone-binding site is contributed by Y16. Residues 28-51 traverse the membrane as a helical segment; it reads YWWNMGSLLGLCLVIQIVTGIFMA. Residues 52-74 lie on the Mitochondrial intermembrane side of the membrane; it reads MHYSSNIELAFSSVEHIMRDVHN. The chain crosses the membrane as a helical span at residues 75 to 102; the sequence is GYILRYLHANGASFFFMVMFMHMAKGLY. Residues H82 and H96 each contribute to the heme b site. Topologically, residues 103 to 110 are mitochondrial matrix; sequence YGSYRSPR. The helical transmembrane segment at 111–135 threads the bilayer; the sequence is VTLWNVGVIIFILTIATAFLGYCCV. Residues 136 to 172 lie on the Mitochondrial intermembrane side of the membrane; the sequence is YGQMSHWGATVITNLFSAIPFVGNDIVSWLWGGFSVS. Residues 173–204 traverse the membrane as a helical segment; sequence NPTIQRFFALHYLVPFIIAAMVIMHLMALHIH. Positions 183 and 197 each coordinate heme b. H202 serves as a coordination point for a ubiquinone. The Mitochondrial matrix segment spans residues 205–223; sequence GSSNPLGITGNLDRIPMHS. Residues 224-246 traverse the membrane as a helical segment; that stretch reads YFIFKDLVTVFLFMLILALFVFY. The Mitochondrial intermembrane portion of the chain corresponds to 247–287; that stretch reads SPNTLGHPDNYIPGNPLVTPASIVPEWYLLPFYAILRSIPD. A helical membrane pass occupies residues 288–308; that stretch reads KLLGVITMFAAILVLLVLPFT. Residues 309–319 lie on the Mitochondrial matrix side of the membrane; it reads DRSVVRGNTFK. A helical membrane pass occupies residues 320 to 340; it reads VLSKFFFFIFVFNFVLLGQIG. Residues 341–347 are Mitochondrial intermembrane-facing; sequence ACHVEVP. The chain crosses the membrane as a helical span at residues 348-364; that stretch reads YVLMGQIATFIYFAYFL. Residues 365-385 lie on the Mitochondrial matrix side of the membrane; it reads IIVPVISTIENVLFYIGRVNK.

Belongs to the cytochrome b family. In terms of assembly, component of the ubiquinol-cytochrome c oxidoreductase (cytochrome b-c1 complex, complex III, CIII), a multisubunit enzyme composed of 10 subunits. The complex is composed of 3 respiratory subunits cytochrome b (COB), cytochrome c1 (CYT1) and Rieske protein (RIP1), 2 core protein subunits COR1 and QCR2, and 5 low-molecular weight protein subunits QCR6, QCR7, QCR8, QCR9 and QCR10. The complex exists as an obligatory dimer and forms supercomplexes (SCs) in the inner mitochondrial membrane with a monomer or a dimer of cytochrome c oxidase (complex IV, CIV), resulting in 2 different assemblies (supercomplexes III(2)IV and III(2)IV(2)). It depends on heme b as a cofactor.

The protein localises to the mitochondrion inner membrane. The catalysed reaction is a quinol + 2 Fe(III)-[cytochrome c](out) = a quinone + 2 Fe(II)-[cytochrome c](out) + 2 H(+)(out). In terms of biological role, component of the ubiquinol-cytochrome c oxidoreductase, a multisubunit transmembrane complex that is part of the mitochondrial electron transport chain which drives oxidative phosphorylation. The respiratory chain contains 3 multisubunit complexes succinate dehydrogenase (complex II, CII), ubiquinol-cytochrome c oxidoreductase (cytochrome b-c1 complex, complex III, CIII) and cytochrome c oxidase (complex IV, CIV), that cooperate to transfer electrons derived from NADH and succinate to molecular oxygen, creating an electrochemical gradient over the inner membrane that drives transmembrane transport and the ATP synthase. The cytochrome b-c1 complex catalyzes electron transfer from ubiquinol to cytochrome c, linking this redox reaction to translocation of protons across the mitochondrial inner membrane, with protons being carried across the membrane as hydrogens on the quinol. In the process called Q cycle, 2 protons are consumed from the matrix, 4 protons are released into the intermembrane space and 2 electrons are passed to cytochrome c. Cytochrome b is a catalytic core subunit containing 2 b-type hemes BL and BH topographically segregated in the quinone reduction (Qi) and quinol oxidation (Q0) sites on opposite sides of the membrane. The polypeptide is Cytochrome b (COB) (Saccharomyces cerevisiae (strain ATCC 204508 / S288c) (Baker's yeast)).